Here is a 67-residue protein sequence, read N- to C-terminus: Probable Sec-independent protein translocase protein TatE (67 aa).

The helical transmembrane segment at 1-21 (MEGISLAKLLIVGALIVLLFG) threads the bilayer. Residues 43 to 67 (MNDDSDATSKTASEDKNAGQAVHKE) are disordered. Residues 54-67 (ASEDKNAGQAVHKE) show a composition bias toward basic and acidic residues.

Belongs to the TatA/E family. TatE subfamily.

It localises to the cell inner membrane. Functionally, part of the twin-arginine translocation (Tat) system that transports large folded proteins containing a characteristic twin-arginine motif in their signal peptide across membranes. TatE shares overlapping functions with TatA. The protein is Probable Sec-independent protein translocase protein TatE of Erwinia tasmaniensis (strain DSM 17950 / CFBP 7177 / CIP 109463 / NCPPB 4357 / Et1/99).